Consider the following 300-residue polypeptide: Light-independent protochlorophyllide reductase iron-sulfur ATP-binding protein (300 aa).

ATP-binding positions include Gly-10 to Thr-15 and Lys-39. Ser-14 contacts Mg(2+). The [4Fe-4S] cluster site is built by Cys-95 and Cys-129. Asn-180 to Arg-181 contacts ATP.

It belongs to the NifH/BchL/ChlL family. In terms of assembly, homodimer. Protochlorophyllide reductase is composed of three subunits; ChlL, ChlN and ChlB. Requires [4Fe-4S] cluster as cofactor.

It is found in the plastid. It localises to the chloroplast. It catalyses the reaction chlorophyllide a + oxidized 2[4Fe-4S]-[ferredoxin] + 2 ADP + 2 phosphate = protochlorophyllide a + reduced 2[4Fe-4S]-[ferredoxin] + 2 ATP + 2 H2O. It participates in porphyrin-containing compound metabolism; chlorophyll biosynthesis (light-independent). Its function is as follows. Component of the dark-operative protochlorophyllide reductase (DPOR) that uses Mg-ATP and reduced ferredoxin to reduce ring D of protochlorophyllide (Pchlide) to form chlorophyllide a (Chlide). This reaction is light-independent. The L component serves as a unique electron donor to the NB-component of the complex, and binds Mg-ATP. This Auxenochlorella protothecoides (Green microalga) protein is Light-independent protochlorophyllide reductase iron-sulfur ATP-binding protein.